A 180-amino-acid chain; its full sequence is Large ribosomal subunit protein eL18 (180 aa).

Residues 152–180 (FGPAPGVPGSHTKPYVISKSRERTNAHRA) are disordered. Positions 170–180 (KSRERTNAHRA) are enriched in basic and acidic residues.

It belongs to the eukaryotic ribosomal protein eL18 family.

It localises to the cytoplasm. This chain is Large ribosomal subunit protein eL18 (RPL18), found in Taenia asiatica (Asian tapeworm).